Here is a 271-residue protein sequence, read N- to C-terminus: MLPTVFIVSDGTGITAETFAHSILSQFDQKFRLVRVPFVDSLDKAYATVEKINEAAVHDGRRAIVFTTLVDSESNDIVKRSNALVLDMFQRFVEPLEQELELKSSHAMGRGHQNADTEEYKTRIEAINFSLAHDDGQSNRNLSEADVILVGVSRSGKTPTSLYLAMQYGVKAANYPLIPEDFERGKLPSALAAYSEKLFGLSIDPQRLSEIRNERRPGSKYAAPENCRYEINEAEAMMRREGIKWLSSTHKSIEEIATTILQEIRLDRQSY.

Residue 151–158 (GVSRSGKT) participates in ADP binding.

It belongs to the pyruvate, phosphate/water dikinase regulatory protein family. PSRP subfamily.

The enzyme catalyses [pyruvate, water dikinase] + ADP = [pyruvate, water dikinase]-phosphate + AMP + H(+). It carries out the reaction [pyruvate, water dikinase]-phosphate + phosphate + H(+) = [pyruvate, water dikinase] + diphosphate. Bifunctional serine/threonine kinase and phosphorylase involved in the regulation of the phosphoenolpyruvate synthase (PEPS) by catalyzing its phosphorylation/dephosphorylation. The protein is Putative phosphoenolpyruvate synthase regulatory protein of Burkholderia lata (strain ATCC 17760 / DSM 23089 / LMG 22485 / NCIMB 9086 / R18194 / 383).